Here is a 272-residue protein sequence, read N- to C-terminus: Indole-3-glycerol phosphate synthase (272 aa).

It belongs to the TrpC family.

The catalysed reaction is 1-(2-carboxyphenylamino)-1-deoxy-D-ribulose 5-phosphate + H(+) = (1S,2R)-1-C-(indol-3-yl)glycerol 3-phosphate + CO2 + H2O. The protein operates within amino-acid biosynthesis; L-tryptophan biosynthesis; L-tryptophan from chorismate: step 4/5. This is Indole-3-glycerol phosphate synthase from Mycolicibacterium vanbaalenii (strain DSM 7251 / JCM 13017 / BCRC 16820 / KCTC 9966 / NRRL B-24157 / PYR-1) (Mycobacterium vanbaalenii).